A 551-amino-acid polypeptide reads, in one-letter code: E3 ubiquitin-protein ligase TRIM8 (551 aa).

Residues 15-56 (CPICLHVFVEPVQLPCKHNFCRGCIGEAWAKDSGLVRCPECN) form an RING-type zinc finger. 2 consecutive B box-type zinc fingers follow at residues 92 to 132 (CVFC…ARGH) and 140 to 182 (VRAW…VCDV). Coiled-coil stretches lie at residues 181-249 (DVEI…DLRQ) and 274-295 (ERMQ…KTED). Residues 399–457 (QYGAAGTASSEGQSGQPLGPCSSTQHLVALPGGTQPVHSSPVFPPSQYPNGSTTQQPML) form a disordered region. Polar residues-rich tracts occupy residues 405–424 (TASS…STQH) and 446–456 (YPNGSTTQQPM).

This sequence belongs to the TRIM/RBCC family. As to quaternary structure, homodimer. Interacts with SOCS1 (via) SH2 domain and SOCS box. Interacts with HSP90AB1; prevents nucleus translocation of phosphorylated STAT3 and HSP90AB1. Interacts with MAP3K7/TAK1. Interacts with PIAS3. Interacts with TICAM1. Interacts with TRIM15; this interaction prevents TRIM8 cytoplasmic translocation. As to expression, high expression in heart, liver, and thymus. Expressed in embryonic CNS, kidney, lens and gut.

It carries out the reaction S-ubiquitinyl-[E2 ubiquitin-conjugating enzyme]-L-cysteine + [acceptor protein]-L-lysine = [E2 ubiquitin-conjugating enzyme]-L-cysteine + N(6)-ubiquitinyl-[acceptor protein]-L-lysine.. The protein operates within protein modification; protein ubiquitination. E3 ubiquitin-protein ligase that participates in multiple biological processes including cell survival, differentiation, apoptosis, and in particular, the innate immune response. Participates in the activation of interferon-gamma signaling by promoting proteasomal degradation of the repressor SOCS1. Plays a positive role in the TNFalpha and IL-1beta signaling pathways. Mechanistically, induces the 'Lys-63'-linked polyubiquitination of MAP3K7/TAK1 component leading to the activation of NF-kappa-B. Also modulates STAT3 activity through negative regulation of PIAS3, either by degradation of PIAS3 through the ubiquitin-proteasome pathway or exclusion of PIAS3 from the nucleus. Negatively regulates TLR3/4-mediated innate immune response by catalyzing 'Lys-6'- and 'Lys-33'-linked polyubiquitination of TICAM1 and thereby disrupting the TICAM1-TBK1 interaction. The sequence is that of E3 ubiquitin-protein ligase TRIM8 (Trim8) from Mus musculus (Mouse).